A 171-amino-acid polypeptide reads, in one-letter code: Protein-export protein SecB (171 aa).

The protein belongs to the SecB family. In terms of assembly, homotetramer, a dimer of dimers. One homotetramer interacts with 1 SecA dimer.

It is found in the cytoplasm. One of the proteins required for the normal export of preproteins out of the cell cytoplasm. It is a molecular chaperone that binds to a subset of precursor proteins, maintaining them in a translocation-competent state. It also specifically binds to its receptor SecA. This chain is Protein-export protein SecB, found in Histophilus somni (strain 2336) (Haemophilus somnus).